The following is a 630-amino-acid chain: MDFPSRFDVIVIGGGHAGTEAALASARMGVKTLLLTHNVETLGHMSCNPAIGGIGKSHLVKEIDALGGAMALATDKSGIQFRVLNNRKGPAVRATRAQADRAIYKAVVREILENQPNLWIFQQNCDDLIVEQDQVKGVVTQMGLRFFAESVVLTTGTFLGGLIHIGLQNHSGGRAGDPPSIALAHRMRELPLRVGRLKTGTPPRIDGRSVDFSVMTEQPGDTPIPVMSFMGNAEMHPRQVSCWITHTNARTHEIIASNLDRSPMYSGVIEGVGPRYCPSIEDKIHRFADKESHQVFIEPEGLNTHELYPNGISTSLPFDVQLELVRSIRGMENAHIVRPGYAIEYDYFDPRDLKYSLETKVIGGLFFAGQINGTTGYEEAGAQGLLAGTNAALRAQGRDSWCPRRDEAYIGVLVDDLITLGTQEPYRMFTSRAEYRLILREDNADLRLTEKGRELGLIDDQRWAAFCAKRDGIEREEQRLKSTWVRPNTEQGQAIVDKFGTPLSHEYSLLNLLARPEIDYAGLIEATGGEAIDPQVAEQVEIRTKYAGYIDRQQDEIARLRASEDTRLPVDIDYTTISGLSKEIQGKLSQTRPQTLGQASRIPGVTPAAISLLLIHLKKRGAGRELEQSA.

13–18 (GGGHAG) contacts FAD. An NAD(+)-binding site is contributed by 273-287 (GPRYCPSIEDKIHRF).

The protein belongs to the MnmG family. Homodimer. Heterotetramer of two MnmE and two MnmG subunits. The cofactor is FAD.

It is found in the cytoplasm. Functionally, NAD-binding protein involved in the addition of a carboxymethylaminomethyl (cmnm) group at the wobble position (U34) of certain tRNAs, forming tRNA-cmnm(5)s(2)U34. The sequence is that of tRNA uridine 5-carboxymethylaminomethyl modification enzyme MnmG from Pseudomonas putida (Arthrobacter siderocapsulatus).